The primary structure comprises 145 residues: Ribosome-binding factor A (145 aa).

Positions Lys-122–Arg-132 are enriched in basic and acidic residues. Positions Lys-122–Asp-145 are disordered.

Belongs to the RbfA family. As to quaternary structure, monomer. Binds 30S ribosomal subunits, but not 50S ribosomal subunits or 70S ribosomes.

It is found in the cytoplasm. Functionally, one of several proteins that assist in the late maturation steps of the functional core of the 30S ribosomal subunit. Associates with free 30S ribosomal subunits (but not with 30S subunits that are part of 70S ribosomes or polysomes). Required for efficient processing of 16S rRNA. May interact with the 5'-terminal helix region of 16S rRNA. This chain is Ribosome-binding factor A, found in Methylorubrum extorquens (strain CM4 / NCIMB 13688) (Methylobacterium extorquens).